The sequence spans 1111 residues: Myosin IB heavy chain (1111 aa).

Residues glutamine 9–aspartate 691 enclose the Myosin motor domain. ATP is bound at residue glycine 102–threonine 109. Residue serine 332 is modified to Phosphoserine. The segment at glycine 547–lysine 627 is actin-binding. The TH1 domain maps to lysine 729–glycine 913. The disordered stretch occupies residues isoleucine 910–alanine 1058. A compositionally biased stretch (polar residues) spans leucine 914–asparagine 928. Composition is skewed to low complexity over residues serine 929–glycine 944, glycine 952–proline 967, and proline 991–proline 1012. Positions glycine 1017–glycine 1040 are enriched in gly residues. Residues proline 1053–asparagine 1111 form the SH3 domain.

This sequence belongs to the TRAFAC class myosin-kinesin ATPase superfamily. Myosin family. As to quaternary structure, myosin I heavy chain is single-headed. Dimer of a heavy and a light chain. Inability to self-assemble into filaments.

It is found in the cell projection. It localises to the pseudopodium. The protein resides in the cytoplasm. Its subcellular location is the cell cortex. Functionally, myosin is a protein that binds to actin and has ATPase activity that is activated by actin. Myosin IB may have a role in chemotaxis and aggregation; it could serve to stabilize and even retract cortical structures, such as pseudopods and lamellopods. Involved in the whole cell motility of aggregation-stages cells. Overexpression results in significant decrease in the rate of cellular translocation and fluid-phase pinocytosis and abnormalities in the normal rearrangement of the actin cytoskeleton. This Dictyostelium discoideum (Social amoeba) protein is Myosin IB heavy chain (myoB).